The sequence spans 338 residues: Rho GTPase-activating protein gacA (338 aa).

Residues 149–327 enclose the Rho-GAP domain; that stretch reads NTLEHVEDEG…NVLSHKVAVH (179 aa).

The protein localises to the cytoplasm. Functionally, rho GTPase-activating protein involved in the signal transduction pathway. This Dictyostelium discoideum (Social amoeba) protein is Rho GTPase-activating protein gacA (gacA).